The following is a 240-amino-acid chain: MATLFIADLHLCAEEPAITAGFLRFLAGEARKADALYILGDLFEAWIGDDDPNPLHRQMAAAIKAVSDSGVPCYFIHGNRDFLLGKRFARESGMTLLPEEKVLELYGRRVLIMHGDTLCTDDAGYQAFRAKVHKPWLQTLFLALPLFVRKRIAARMRANSKEANSSKSLAIMDVNQNAVVSAMEKHQVQWLIHGHTHRPAVHELIANQQTAFRVVLGAWHTEGSMVKVTADDVELIHFPF.

Mn(2+) is bound by residues Asp8, His10, Asp41, Asn79, and His114. 79–80 is a binding site for substrate; sequence NR. The substrate site is built by Asp122, Ser160, Asn164, Lys167, and His195. Residues His195 and His197 each coordinate Mn(2+).

The protein belongs to the LpxH family. The cofactor is Mn(2+).

The protein localises to the cell inner membrane. The catalysed reaction is UDP-2-N,3-O-bis[(3R)-3-hydroxytetradecanoyl]-alpha-D-glucosamine + H2O = 2-N,3-O-bis[(3R)-3-hydroxytetradecanoyl]-alpha-D-glucosaminyl 1-phosphate + UMP + 2 H(+). Its pathway is glycolipid biosynthesis; lipid IV(A) biosynthesis; lipid IV(A) from (3R)-3-hydroxytetradecanoyl-[acyl-carrier-protein] and UDP-N-acetyl-alpha-D-glucosamine: step 4/6. Functionally, hydrolyzes the pyrophosphate bond of UDP-2,3-diacylglucosamine to yield 2,3-diacylglucosamine 1-phosphate (lipid X) and UMP by catalyzing the attack of water at the alpha-P atom. Involved in the biosynthesis of lipid A, a phosphorylated glycolipid that anchors the lipopolysaccharide to the outer membrane of the cell. This chain is UDP-2,3-diacylglucosamine hydrolase, found in Escherichia coli O81 (strain ED1a).